The chain runs to 160 residues: MTSADRRRDAVARIIRARRIGTQEELLAALERAGFRATQATLSRDLARLGARRVSGPEGAVYELGADGADGGLAALRGLVSSIAANASMVVIRTHPGSAPAIARAIDLAQPPEVLGTIAGDDTIFVAPAGELRPRRLAARLAELLGTPSALAGEGGERTH.

The protein belongs to the ArgR family.

The protein localises to the cytoplasm. Its pathway is amino-acid biosynthesis; L-arginine biosynthesis [regulation]. Regulates arginine biosynthesis genes. The chain is Arginine repressor from Anaeromyxobacter dehalogenans (strain 2CP-1 / ATCC BAA-258).